Here is a 482-residue protein sequence, read N- to C-terminus: MFS-type transporter cnsL (482 aa).

The helical transmembrane segment at leucine 73–tyrosine 93 threads the bilayer. Asparagine 100 carries N-linked (GlcNAc...) asparagine glycosylation. 9 consecutive transmembrane segments (helical) span residues tryptophan 108 to leucine 128, valine 131 to valine 151, isoleucine 170 to tyrosine 190, isoleucine 199 to leucine 219, leucine 304 to alanine 324, alanine 333 to proline 353, leucine 361 to tyrosine 381, isoleucine 392 to threonine 412, and valine 426 to cysteine 446.

Belongs to the major facilitator superfamily. Allantoate permease family.

The protein localises to the cell membrane. MFS-type transporter; part of the gene cluster that mediates the biosynthesis of communesins, a prominent class of indole alkaloids with great potential as pharmaceuticals. With the MFS transporter cnsO, is most likely responsible for cummunesins secretion and thereby may contribute to intrinsic resistance. The chain is MFS-type transporter cnsL from Penicillium expansum (Blue mold rot fungus).